A 168-amino-acid chain; its full sequence is Phosphopantetheine adenylyltransferase (168 aa).

Threonine 13 contributes to the substrate binding site. ATP-binding positions include 13-14 and histidine 21; that span reads TF. Residues lysine 45, leucine 78, and arginine 92 each contribute to the substrate site. Residues 93 to 95, glutamate 103, and 128 to 134 contribute to the ATP site; these read GLR and TQFISSG.

It belongs to the bacterial CoaD family. Homohexamer. Requires Mg(2+) as cofactor.

It is found in the cytoplasm. It catalyses the reaction (R)-4'-phosphopantetheine + ATP + H(+) = 3'-dephospho-CoA + diphosphate. The protein operates within cofactor biosynthesis; coenzyme A biosynthesis; CoA from (R)-pantothenate: step 4/5. Functionally, reversibly transfers an adenylyl group from ATP to 4'-phosphopantetheine, yielding dephospho-CoA (dPCoA) and pyrophosphate. This Wolbachia sp. subsp. Drosophila simulans (strain wRi) protein is Phosphopantetheine adenylyltransferase.